The sequence spans 315 residues: MLKMESTQQMAVSIINSSFEAAVVAATSALENMGIEYDYQDIYSRVKNKFDFVMDDSGVKNNLIGKAITIDQALNNKFGSAIRNRNWLADTSRPAKLDEDVNKLRMMLSSKGIDQKMRVLNACFSVKRIPGKSSSIIKCTKLMRDKLERGEVEVDDSFVDEKMEVDTIDWKSRYEQLEQRFESLKSRVNEKYNNWVLKARKMNENMHSLQNVISQQQAHIAELQVYNNKLERDLQNKIGSLTSSIEWYLRSMELDPEIKADIEQQINSIDAINPLHAFDDLESVIRNLISDYDKLFLMFKGLIQRCNYQYSFGCE.

Positions 1-149 (MLKMESTQQM…TKLMRDKLER (149 aa)) are RNA-binding. Residues 150-206 (GEVEVDDSFVDEKMEVDTIDWKSRYEQLEQRFESLKSRVNEKYNNWVLKARKMNENM) form a dimerization region. Positions 166–237 (DTIDWKSRYE…NKLERDLQNK (72 aa)) form a coiled coil. The interval 170 to 234 (WKSRYEQLEQ…VYNNKLERDL (65 aa)) is interaction with host ZC3H7B. An interaction with host EIF4G1 region spans residues 208–315 (SLQNVISQQQ…CNYQYSFGCE (108 aa)).

This sequence belongs to the rotavirus NSP3 family. Homodimer. Interacts (via the coiled-coil region) with host ZC3H7B (via LD motif). Interacts with host EIF4G1.

Its subcellular location is the host cytoplasm. Functionally, plays an important role in stimulating the translation of viral mRNAs. These mRNAs are capped but not polyadenylated, instead terminating in a conserved sequence 'GACC' at the 3' that is recognized by NSP3, which competes with host PABPC1 for EIF4G1 binding. The interaction between NSP3 and host EIF4G1 stabilizes the EIF4E-EIF4G1 interaction, thereby facilitating the initiation of capped mRNA translation. This Macaca mulatta (Rhesus macaque) protein is Non-structural protein 3.